The following is an 80-amino-acid chain: Kappa-actitoxin-Avd4f (80 aa).

The first 19 residues, 1–19, serve as a signal peptide directing secretion; it reads MNKALFLCLVVLCAAVVFA. The propeptide occupies 20 to 31; it reads AEDLQKAKHAPF. 3 disulfides stabilise this stretch: C41/C76, C43/C69, and C59/C77.

This sequence belongs to the sea anemone type 3 (BDS) potassium channel toxin family. Moderately expressed in the ectodermal tissue from the distal and proximal tentacles, body wall, and oral disk.

It is found in the secreted. Its subcellular location is the nematocyst. Blocks Kv3 voltage-gated potassium channels. Reduces blood pressure. The chain is Kappa-actitoxin-Avd4f from Anemonia viridis (Snakelocks anemone).